Consider the following 791-residue polypeptide: Vezatin (791 aa).

2 helical membrane-spanning segments follow: residues 138-158 and 163-183; these read IATP…ALAA and SISS…FTVL. The stretch at 435 to 464 forms a coiled coil; sequence VRSLQLHLKALLNEVIILEDELEKLSSCKE. Residues 752–769 are compositionally biased toward acidic residues; it reads GDEWDDDDDDNDNDDDNY. The interval 752–791 is disordered; the sequence is GDEWDDDDDDNDNDDDNYDQVKNVESHEKERNNVSLQLEE. The span at 773 to 783 shows a compositional bias: basic and acidic residues; the sequence is KNVESHEKERN.

It belongs to the vezatin family. As to quaternary structure, interacts with myosin VIIa and the cadherin-catenins complex.

It is found in the cell membrane. Its subcellular location is the cell junction. The protein resides in the adherens junction. It localises to the nucleus. Its function is as follows. Plays a pivotal role in the establishment of adherens junctions and their maintenance in adult life. The chain is Vezatin (vezt) from Xenopus tropicalis (Western clawed frog).